A 410-amino-acid polypeptide reads, in one-letter code: Exopolygalacturonase (410 aa).

An N-terminal signal peptide occupies residues 1 to 22 (MACIDNAMRALFLLALFCVVHG). N-linked (GlcNAc...) asparagine glycans are attached at residues Asn89 and Asn201. 5 PbH1 repeats span residues 192–218 (CKDMLIKDVNVTAPGDSPNTDGIHMGD), 219–240 (SSGVTITNTVIGVGDDCISIGP), 242–262 (TSKVNITGVTCGPGHGISIGS), 272–293 (VTDINVKDCTLKKTANGVRIKA), and 337–377 (ASKV…TMDD). Asp233 serves as the catalytic Proton donor. Cys235 and Cys252 are oxidised to a cystine. A glycan (N-linked (GlcNAc...) asparagine) is linked at Asn246. Residue His256 is part of the active site. An N-linked (GlcNAc...) asparagine glycan is attached at Asn349. An intrachain disulfide couples Cys364 to Cys370. An N-linked (GlcNAc...) asparagine glycan is attached at Asn387. A disulfide bond links Cys393 and Cys409.

Belongs to the glycosyl hydrolase 28 family. In terms of tissue distribution, pollen.

The protein resides in the secreted. It is found in the cell wall. The catalysed reaction is [(1-&gt;4)-alpha-D-galacturonosyl](n) + H2O = alpha-D-galacturonate + [(1-&gt;4)-alpha-D-galacturonosyl](n-1). In terms of biological role, may function in depolymerizing pectin during pollen development, germination, and tube growth. Acts as an exo-polygalacturonase. This is Exopolygalacturonase (PG2C) from Zea mays (Maize).